Here is a 308-residue protein sequence, read N- to C-terminus: Ectoine dioxygenase (308 aa).

Residue glutamine 131 coordinates L-ectoine. Residue lysine 137 participates in 2-oxoglutarate binding. Fe cation-binding residues include histidine 148, aspartate 150, and histidine 249.

Belongs to the PhyH family. EctD subfamily. As to quaternary structure, homodimer. Requires Fe(2+) as cofactor.

The catalysed reaction is L-ectoine + 2-oxoglutarate + O2 = 5-hydroxyectoine + succinate + CO2. In terms of biological role, involved in the biosynthesis of 5-hydroxyectoine, called compatible solute, which helps organisms to survive extreme osmotic stress by acting as a highly soluble organic osmolyte. Catalyzes the 2-oxoglutarate-dependent selective hydroxylation of L-ectoine to yield (4S,5S)-5-hydroxyectoine. This is Ectoine dioxygenase from Bordetella bronchiseptica (strain ATCC BAA-588 / NCTC 13252 / RB50) (Alcaligenes bronchisepticus).